The chain runs to 456 residues: Adenylosuccinate synthetase isozyme 2 (456 aa).

A disordered region spans residues 1-24 (MAFAETNPAASSLPNGDCGRPRAR). Residues 39–45 (GDEGKGK) and 67–69 (GHT) contribute to the GTP site. The Proton acceptor role is filled by Asp40. Mg(2+)-binding residues include Asp40 and Gly67. Asp40 serves as a coordination point for substrate. IMP is bound by residues 40–43 (DEGK), 65–68 (NAGH), Thr162, Arg176, Asn255, Thr270, and Arg334. Residue His68 is the Proton donor of the active site. 330–336 (VTTGRKR) lines the substrate pocket. GTP-binding positions include Arg336, 362–364 (KLD), and 444–447 (GVGK).

It belongs to the adenylosuccinate synthetase family. In terms of assembly, homodimer. Mg(2+) is required as a cofactor. As to expression, widely expressed.

The protein resides in the cytoplasm. It localises to the mitochondrion. It carries out the reaction IMP + L-aspartate + GTP = N(6)-(1,2-dicarboxyethyl)-AMP + GDP + phosphate + 2 H(+). It participates in purine metabolism; AMP biosynthesis via de novo pathway; AMP from IMP: step 1/2. Inhibited competitively by AMP and IMP and non-competitively by fructose 1,6-bisphosphate. In terms of biological role, plays an important role in the de novo pathway and in the salvage pathway of purine nucleotide biosynthesis. Catalyzes the first committed step in the biosynthesis of AMP from IMP. The protein is Adenylosuccinate synthetase isozyme 2 of Sus scrofa (Pig).